Consider the following 67-residue polypeptide: Small integral membrane protein 20 (67 aa).

The Mitochondrial matrix segment spans residues 1 to 6 (MSRNLR). A helical membrane pass occupies residues 7–27 (TALIFGGFISLIGAAFYPIYF). Residues 28–67 (RPLMRLEEYKKEQAINRAGIVQEDVQPPGLKVWSDPFGRK) lie on the Mitochondrial intermembrane side of the membrane. Phe64 carries the post-translational modification Phenylalanine amide.

As to quaternary structure, component of the MITRAC (mitochondrial translation regulation assembly intermediate of cytochrome c oxidase complex) complex, the core components of this complex being COA3/MITRAC12 and COX14. Interacts with COA3/MITRAC12 and COX4I1. Directly interacts with newly synthesized MT-CO1/COX1. In terms of tissue distribution, expressed in the ovary, specifically in granulosa cells of follicles that have passed the primary stage and in oocytes (at protein level).

Its subcellular location is the mitochondrion inner membrane. It localises to the secreted. Functionally, component of the MITRAC (mitochondrial translation regulation assembly intermediate of cytochrome c oxidase complex) complex, that regulates cytochrome c oxidase assembly. Promotes the progression of complex assembly after the association of MT-CO1/COX1 with COX4I1 and COX6C. Chaperone-like assembly factor required to stabilize newly synthesized MT-CO1/COX1 and to prevent its premature turnover. Peptide involved in a broad spectrum of regulatory functions. Is a ligand for GPR173. As part of the reproductive cycle, it regulates gonadotropin-releasing hormone (GnRH) signaling in the hypothalamus and pituitary gland which augments the release of luteinizing hormone. Plays a protective role in memory retention through activation of GNRHR. Regulates the secretion of AVP by hypothalamic neurons. Plays a role in the transduction of the itch sensation. Induces anxiolytic effects, reducing behavior associated with anxiety. Regulates food intake as well as satiation and satiety. In the ovary, it regulates follicular growth by stimulating granulosa cell proliferation by increasing the expression of GPR173, CREB1, CYP19A1, KITLG, FSHR, and LHCGR. It also increases the production of estradiol (E2). In the heart, it regulates contractility and relaxation. It also plays a cardioprotective role during ischemia, where it activates the SAFE and RISK pathways. Stimulates the proliferation and differentiation of preadipocytes. In pancreatic islet cells, it induces proliferation of islet cells as well as the production of INS. This is Small integral membrane protein 20 (SMIM20) from Homo sapiens (Human).